We begin with the raw amino-acid sequence, 261 residues long: Putative carbamate hydrolase RutD (261 aa).

The AB hydrolase-1 domain maps to 14–119; the sequence is PTILLSSGLG…LINAWSKADP (106 aa).

It belongs to the AB hydrolase superfamily. Hydrolase RutD family.

It catalyses the reaction carbamate + 2 H(+) = NH4(+) + CO2. Its function is as follows. Involved in pyrimidine catabolism. May facilitate the hydrolysis of carbamate, a reaction that can also occur spontaneously. This Agrobacterium fabrum (strain C58 / ATCC 33970) (Agrobacterium tumefaciens (strain C58)) protein is Putative carbamate hydrolase RutD.